Here is a 225-residue protein sequence, read N- to C-terminus: Membrane protein (225 aa).

The Virion surface portion of the chain corresponds to 1–20 (MSNETNCTLDFEQSVELFKE). The helical transmembrane segment at 21–41 (YNLFITAFLLFLTIILQYGYA) threads the bilayer. Over 42 to 51 (TRIRFIYILK) the chain is Intravirion. The chain crosses the membrane as a helical span at residues 52-72 (MIVLWCFWPLNIAVGVISCIY). The Virion surface portion of the chain corresponds to 73–77 (PPNTG). A helical membrane pass occupies residues 78 to 98 (GLVAAIILTVFACLSFVGYWI). The Intravirion portion of the chain corresponds to 99-225 (QSCRLFKRCR…VATGGSSLYT (127 aa)).

This sequence belongs to the gammacoronaviruses M protein family. As to quaternary structure, homomultimer. Interacts with envelope E protein in the budding compartment of the host cell, which is located between endoplasmic reticulum and the Golgi complex. Forms a complex with HE and S proteins. Interacts with nucleocapsid N protein. This interaction probably participates in RNA packaging into the virus.

Its subcellular location is the virion membrane. It localises to the host Golgi apparatus membrane. Its function is as follows. Component of the viral envelope that plays a central role in virus morphogenesis and assembly via its interactions with other viral proteins. The chain is Membrane protein from Avian infectious bronchitis virus (strain KB8523) (IBV).